Here is a 140-residue protein sequence, read N- to C-terminus: Nucleoside diphosphate kinase (140 aa).

ATP-binding residues include K11, F59, R87, T93, R104, and N114. H117 acts as the Pros-phosphohistidine intermediate in catalysis.

The protein belongs to the NDK family. In terms of assembly, homotetramer. It depends on Mg(2+) as a cofactor.

The protein resides in the cytoplasm. It carries out the reaction a 2'-deoxyribonucleoside 5'-diphosphate + ATP = a 2'-deoxyribonucleoside 5'-triphosphate + ADP. The catalysed reaction is a ribonucleoside 5'-diphosphate + ATP = a ribonucleoside 5'-triphosphate + ADP. Functionally, major role in the synthesis of nucleoside triphosphates other than ATP. The ATP gamma phosphate is transferred to the NDP beta phosphate via a ping-pong mechanism, using a phosphorylated active-site intermediate. This chain is Nucleoside diphosphate kinase, found in Rhizobium etli (strain ATCC 51251 / DSM 11541 / JCM 21823 / NBRC 15573 / CFN 42).